Here is a 482-residue protein sequence, read N- to C-terminus: Glutamyl-tRNA(Gln) amidotransferase subunit A (482 aa).

Residues Lys81 and Ser156 each act as charge relay system in the active site. Ser180 functions as the Acyl-ester intermediate in the catalytic mechanism.

This sequence belongs to the amidase family. GatA subfamily. Heterotrimer of A, B and C subunits.

The enzyme catalyses L-glutamyl-tRNA(Gln) + L-glutamine + ATP + H2O = L-glutaminyl-tRNA(Gln) + L-glutamate + ADP + phosphate + H(+). Its function is as follows. Allows the formation of correctly charged Gln-tRNA(Gln) through the transamidation of misacylated Glu-tRNA(Gln) in organisms which lack glutaminyl-tRNA synthetase. The reaction takes place in the presence of glutamine and ATP through an activated gamma-phospho-Glu-tRNA(Gln). The protein is Glutamyl-tRNA(Gln) amidotransferase subunit A of Brachyspira hyodysenteriae (strain ATCC 49526 / WA1).